Consider the following 238-residue polypeptide: Glyceraldehyde 3-phosphate phosphatase (238 aa).

This sequence belongs to the HAD-like hydrolase superfamily. Mg(2+) is required as a cofactor.

Functionally, catalyzes the dephosphorylation of D,L-glyceraldehyde 3-phosphate in vitro. This is Glyceraldehyde 3-phosphate phosphatase from Pyrococcus abyssi (strain GE5 / Orsay).